The primary structure comprises 658 residues: MAKVAQIRAIVEQLKRYDYHYYVLDDPLVSDFEYDQLYKQLQALEQAHPELIQPDSPTQRVGGIVVEAFNKFPHQNPMLSLDNAFDTATIASFIANINNLTGVQNRFVVEPKIDGVSISLTYENGLLTRALTRGDGLVGEDVLSNVKTIKSIPLTIPFHKQVEIRGEIFVDKKTFAQINENLAKPFANARNLAAGTLRNLNSEVSAKRKLKAFFYFVPNALTLGCRSQSAVLAQLKQWNFPVSKAVASFDRPEALIEYLEQFDQTRDQLNFQVDGLVVKLDNFHFYDQLGFTSKFPRWALAYKFKPKFVQTKLRGVLVTVGRTGKINYTAQLDPVNLEGTVVSAATLHNFDYIKEKDIRLNDTVIIYKAGEIIPKVLEVCLPLRTAANQPIPEQTHCPACQAPLVQYKDEVDQYCTNERCDQRNLEAINYFVSKTAMDIQGLSIQTISKLYENNLVRSVVDLYHLKEHKAAVLALELKIGEVLFNKLISSIEQSKTKGMARLLTGLGIKHVGQVLAKSLTKHFENIDALQSASMETLLELPDVGPTVAESLFNWFHNDNNLQLLAALKAVGVQMDALKSNTNFDTASIYFQKSFVITGSFPISRDTIKNLLVNKYDCRFTNNVTSKVDFVLAGIKATPRKLEQAKALNIPIINEPIWT.

NAD(+) is bound by residues aspartate 31–aspartate 35, serine 80–leucine 81, and glutamate 110. Residue lysine 112 is the N6-AMP-lysine intermediate of the active site. NAD(+)-binding residues include arginine 133, glutamate 167, lysine 279, and lysine 303. Zn(2+) contacts are provided by cysteine 397, cysteine 400, cysteine 415, and cysteine 420. One can recognise a BRCT domain in the interval aspartate 584 to glutamate 654.

Belongs to the NAD-dependent DNA ligase family. LigA subfamily. It depends on Mg(2+) as a cofactor. Requires Mn(2+) as cofactor.

The catalysed reaction is NAD(+) + (deoxyribonucleotide)n-3'-hydroxyl + 5'-phospho-(deoxyribonucleotide)m = (deoxyribonucleotide)n+m + AMP + beta-nicotinamide D-nucleotide.. Functionally, DNA ligase that catalyzes the formation of phosphodiester linkages between 5'-phosphoryl and 3'-hydroxyl groups in double-stranded DNA using NAD as a coenzyme and as the energy source for the reaction. It is essential for DNA replication and repair of damaged DNA. The chain is DNA ligase from Mycoplasma pneumoniae (strain ATCC 29342 / M129 / Subtype 1) (Mycoplasmoides pneumoniae).